Reading from the N-terminus, the 255-residue chain is Sec-independent protein translocase protein TatC (255 aa).

7 helical membrane passes run 28–48 (VAAVLLIFAALFYFAQDIYAL), 56–76 (YLPEGATMIATGVASPFLAPF), 80–100 (LMISLFLAMPVVLHQVWGFIA), 121–141 (LFYAGMAFAYFVVFPIMFGFF), 165–185 (LFFAFGVAFEVPVATFLLIWV), 195–212 (NSRPYVIVGCFVVGMVLT), and 216–236 (VFSQTLLAVPMWLLFEIGVFF).

This sequence belongs to the TatC family. The Tat system comprises two distinct complexes: a TatABC complex, containing multiple copies of TatA, TatB and TatC subunits, and a separate TatA complex, containing only TatA subunits. Substrates initially bind to the TatABC complex, which probably triggers association of the separate TatA complex to form the active translocon.

Its subcellular location is the cell membrane. Part of the twin-arginine translocation (Tat) system that transports large folded proteins containing a characteristic twin-arginine motif in their signal peptide across membranes. Together with TatB, TatC is part of a receptor directly interacting with Tat signal peptides. The polypeptide is Sec-independent protein translocase protein TatC (Azotobacter chroococcum mcd 1).